A 463-amino-acid polypeptide reads, in one-letter code: UDP-N-acetylmuramoyl-L-alanyl-D-glutamate--2,6-diaminopimelate ligase (463 aa).

T21 serves as a coordination point for UDP-N-acetyl-alpha-D-muramoyl-L-alanyl-D-glutamate. Residue 94 to 100 (GTNGKTT) participates in ATP binding. UDP-N-acetyl-alpha-D-muramoyl-L-alanyl-D-glutamate-binding positions include 137-138 (TT), S164, Q170, and R172. An N6-carboxylysine modification is found at K204. Meso-2,6-diaminopimelate contacts are provided by residues R358, 382–385 (DNPR), G433, and E437. A Meso-diaminopimelate recognition motif motif is present at residues 382 to 385 (DNPR).

This sequence belongs to the MurCDEF family. MurE subfamily. Mg(2+) serves as cofactor. Post-translationally, carboxylation is probably crucial for Mg(2+) binding and, consequently, for the gamma-phosphate positioning of ATP.

It is found in the cytoplasm. It catalyses the reaction UDP-N-acetyl-alpha-D-muramoyl-L-alanyl-D-glutamate + meso-2,6-diaminopimelate + ATP = UDP-N-acetyl-alpha-D-muramoyl-L-alanyl-gamma-D-glutamyl-meso-2,6-diaminopimelate + ADP + phosphate + H(+). It participates in cell wall biogenesis; peptidoglycan biosynthesis. Its function is as follows. Catalyzes the addition of meso-diaminopimelic acid to the nucleotide precursor UDP-N-acetylmuramoyl-L-alanyl-D-glutamate (UMAG) in the biosynthesis of bacterial cell-wall peptidoglycan. The chain is UDP-N-acetylmuramoyl-L-alanyl-D-glutamate--2,6-diaminopimelate ligase from Helicobacter hepaticus (strain ATCC 51449 / 3B1).